Reading from the N-terminus, the 80-residue chain is Cytochrome c oxidase subunit 7A1, mitochondrial (80 aa).

A mitochondrion-targeting transit peptide spans 1–21 (MLAPRVSQALIRSFSSTARNR). The Mitochondrial matrix segment spans residues 22–46 (LKNRVPEKQKLFQEDNGIPVYLKGG). A helical membrane pass occupies residues 47–75 (VVDHILYRVTMGLCLGGTAYGVYCLAWAS). Over 76–80 (FPRNK) the chain is Mitochondrial intermembrane.

This sequence belongs to the cytochrome c oxidase VIIa family. Component of the complex IV (CIV, cytochrome c oxidase), a multisubunit enzyme composed of 14 subunits. The complex is composed of a catalytic core of 3 subunits MT-CO1, MT-CO2 and MT-CO3, encoded in the mitochondrial DNA, and 11 supernumerary subunits COX4I1 (or COX4I2), COX5A, COX5B, COX6A2 (or COX6A1), COX6B1 (or COX6B2), COX6C, COX7A1 (or COX7A2), COX7B, COX7C, COX8B and NDUFA4, which are encoded in the nuclear genome. The complex exists as a monomer or a dimer and forms supercomplexes (SCs) in the inner mitochondrial membrane with NADH-ubiquinone oxidoreductase (complex I, CI) and ubiquinol-cytochrome c oxidoreductase (cytochrome b-c1 complex, complex III, CIII), resulting in different assemblies (supercomplex SCI(1)III(2)IV(1) and megacomplex MCI(2)III(2)IV(2)).

It is found in the mitochondrion inner membrane. It functions in the pathway energy metabolism; oxidative phosphorylation. In terms of biological role, component of the mitochondrial respiratory complex IV (CIV, also named cytochrome c oxidase complex), the last enzyme in the mitochondrial electron transport chain which drives oxidative phosphorylation. The CIV complex is the component of the respiratory chain that catalyzes the reduction of oxygen to water. Acts as an assembly factor that specifically drives the homodimerization of CIV complexes, mediating the formation of mitochondrial respiratory supercomplexes (respirasomes) containing two CIV: supercomplxes with two molecules of CIV show improved activity. Despite being highly expressed in brown adipose tissue, not required for thermogenesis. The sequence is that of Cytochrome c oxidase subunit 7A1, mitochondrial (COX7A1) from Saimiri sciureus (Common squirrel monkey).